The chain runs to 113 residues: U11-theraphotoxin-Hhn1o (113 aa).

The signal sequence occupies residues 1 to 21; sequence MNTVRVTFLLVFVLAVSLGQA. Residues 22–74 constitute a propeptide that is removed on maturation; sequence DKDENRMEMQEKTEQGKSYLDFAENLLLQKLEELEAKLLEEDSEESRNSRQKR. Residues 61–83 are disordered; the sequence is EEDSEESRNSRQKRCIGEGVPCD. 2 cysteine pairs are disulfide-bonded: cysteine 75–cysteine 90 and cysteine 82–cysteine 95.

Belongs to the neurotoxin 14 (magi-1) family. 01 (HNTX-16) subfamily. As to expression, expressed by the venom gland.

The protein resides in the secreted. Its function is as follows. Probable ion channel inhibitor. The protein is U11-theraphotoxin-Hhn1o of Cyriopagopus hainanus (Chinese bird spider).